The chain runs to 382 residues: Ferredoxin--NADP reductase, root isozyme 2, chloroplastic (382 aa).

A chloroplast-targeting transit peptide spans Met1–Ile64. The 129-residue stretch at Lys97 to Leu225 folds into the FAD-binding FR-type domain. Cys200 and Cys205 are oxidised to a cystine. At Ser201 the chain carries Phosphoserine. Thr233 is modified (phosphothreonine). Ile235–Met253 lines the NADP(+) pocket.

It belongs to the ferredoxin--NADP reductase type 1 family. FAD serves as cofactor. In terms of tissue distribution, expressed in shoots and roots. More abundant in roots than RFNR1.

It is found in the plastid. It localises to the chloroplast. The enzyme catalyses 2 reduced [2Fe-2S]-[ferredoxin] + NADP(+) + H(+) = 2 oxidized [2Fe-2S]-[ferredoxin] + NADPH. In terms of biological role, maintains the supply of reduced ferredoxin under non-photosynthetic conditions. In Arabidopsis thaliana (Mouse-ear cress), this protein is Ferredoxin--NADP reductase, root isozyme 2, chloroplastic (RFNR2).